A 535-amino-acid polypeptide reads, in one-letter code: Major glycerophosphoinositol permease GIT3 (535 aa).

A helical membrane pass occupies residues 49 to 69 (VVTSVKANSLWPAFASGAGLF). N-linked (GlcNAc...) asparagine glycosylation is present at Asn-75. Transmembrane regions (helical) follow at residues 101 to 121 (NIAS…GYIS), 137 to 157 (LIFF…QGFF), 165 to 185 (FFLG…ASEF), 204 to 224 (AMID…IWIF), and 232 to 252 (LWRV…FMRL). The N-linked (GlcNAc...) asparagine glycan is linked to Asn-256. 6 consecutive transmembrane segments (helical) span residues 275-295 (WWLI…IWFI), 324-344 (WGWS…GAIS), 352-372 (LTLA…SACL), 378-398 (HIAG…FGPG), 419-439 (GIAA…FPAI), and 455-475 (VPFY…IFFC). N-linked (GlcNAc...) asparagine glycosylation is present at Asn-532.

This sequence belongs to the major facilitator superfamily. Sugar transporter (TC 2.A.1.1) family.

It is found in the cell membrane. The catalysed reaction is sn-glycerol 3-phosphocholine(out) = sn-glycerol 3-phosphocholine(in). Its function is as follows. Glycerophosphodiester transporter that mediates uptake of glycerophosphocholine (GroPCho) with GIT4. GIT3 acts as the major GroPCho permease. Does not possess detectable glycerophosphoinositol (GroPIns) transport activity. The expanded ability to utilize GroPIns and GroPCho results from the organism's pathogenic nature and its need to occupy a variety of environments within its host organism. This possibility is buttressed by the fact that GroPIns and GroPCho are present and abundant in human fluids. The polypeptide is Major glycerophosphoinositol permease GIT3 (Candida albicans (strain SC5314 / ATCC MYA-2876) (Yeast)).